Here is a 668-residue protein sequence, read N- to C-terminus: Bifunctional polymyxin resistance protein ArnA (668 aa).

Residues 1 to 307 (MSAKTVVFAY…ELGLVDGSLL (307 aa)) form a formyltransferase ArnAFT region. The Proton donor; for formyltransferase activity role is filled by H106. (6R)-10-formyltetrahydrofolate contacts are provided by residues R116 and 138–142 (VKRAD). A dehydrogenase ArnADH region spans residues 317–668 (RRTRVLILGV…IERPSNKEAC (352 aa)). NAD(+) is bound by residues D350 and 371–372 (DI). Residues A396, Y401, and 435 to 436 (TS) each bind UDP-alpha-D-glucuronate. The active-site Proton acceptor; for decarboxylase activity is the E437. UDP-alpha-D-glucuronate is bound by residues R463, N494, 528–537 (RLFDGGEQKR), and Y615. Residue R621 is the Proton donor; for decarboxylase activity of the active site.

The protein in the N-terminal section; belongs to the Fmt family. UDP-L-Ara4N formyltransferase subfamily. It in the C-terminal section; belongs to the NAD(P)-dependent epimerase/dehydratase family. UDP-glucuronic acid decarboxylase subfamily. In terms of assembly, homohexamer, formed by a dimer of trimers.

It catalyses the reaction UDP-alpha-D-glucuronate + NAD(+) = UDP-beta-L-threo-pentopyranos-4-ulose + CO2 + NADH. The catalysed reaction is UDP-4-amino-4-deoxy-beta-L-arabinose + (6R)-10-formyltetrahydrofolate = UDP-4-deoxy-4-formamido-beta-L-arabinose + (6S)-5,6,7,8-tetrahydrofolate + H(+). It participates in nucleotide-sugar biosynthesis; UDP-4-deoxy-4-formamido-beta-L-arabinose biosynthesis; UDP-4-deoxy-4-formamido-beta-L-arabinose from UDP-alpha-D-glucuronate: step 1/3. The protein operates within nucleotide-sugar biosynthesis; UDP-4-deoxy-4-formamido-beta-L-arabinose biosynthesis; UDP-4-deoxy-4-formamido-beta-L-arabinose from UDP-alpha-D-glucuronate: step 3/3. It functions in the pathway bacterial outer membrane biogenesis; lipopolysaccharide biosynthesis. Bifunctional enzyme that catalyzes the oxidative decarboxylation of UDP-glucuronic acid (UDP-GlcUA) to UDP-4-keto-arabinose (UDP-Ara4O) and the addition of a formyl group to UDP-4-amino-4-deoxy-L-arabinose (UDP-L-Ara4N) to form UDP-L-4-formamido-arabinose (UDP-L-Ara4FN). The modified arabinose is attached to lipid A and is required for resistance to polymyxin and cationic antimicrobial peptides. This is Bifunctional polymyxin resistance protein ArnA from Pseudomonas fluorescens (strain Pf0-1).